Consider the following 590-residue polypeptide: Interferon alpha/beta receptor 1 (590 aa).

The signal sequence occupies residues 1–26; the sequence is MLAVVGAAALVLVAGAPWVLPSAAGG. Residues 27–429 lie on the Extracellular side of the membrane; it reads ENLKPPENID…EKTRPGSFST (403 aa). 4 Fibronectin type-III domains span residues 31-125, 127-226, 230-327, and 332-425; these read PPEN…PFYT, HMSP…TTVA, PVPG…FIDS, and LPPP…TRPG. A glycan (N-linked (GlcNAc...) asparagine) is linked at asparagine 43. Cysteine 78 and cysteine 86 form a disulfide bridge. 3 N-linked (GlcNAc...) asparagine glycosylation sites follow: asparagine 109, asparagine 181, and asparagine 214. Intrachain disulfides connect cysteine 199–cysteine 220 and cysteine 284–cysteine 292. Residues asparagine 314, asparagine 370, asparagine 409, and asparagine 413 are each glycosylated (N-linked (GlcNAc...) asparagine). Cysteine 397 and cysteine 419 form a disulfide bridge. The helical transmembrane segment at 430-449 threads the bilayer; that stretch reads IWIITGLGVVFFSVMVLYAL. Residues 450 to 590 are Cytoplasmic-facing; that stretch reads RSVWKYLCHV…ALRTEPALLC (141 aa). Residues 483-492 form an important for interaction with TYK2 region; sequence VLLTAEEHTE. Positions 514 to 545 are disordered; that stretch reads DLRKYSSQTSQDSGNYSNEEEESVGTESGQAV. Residue lysine 517 forms a Glycyl lysine isopeptide (Lys-Gly) (interchain with G-Cter in ubiquitin) linkage. Residues 518–530 show a composition bias toward polar residues; the sequence is YSSQTSQDSGNYS. At serine 526 the chain carries Phosphoserine.

The protein belongs to the type II cytokine receptor family. As to quaternary structure, heterodimer with IFNAR2; forming the receptor for type I interferon. Interacts with TYK2. Interacts with STAT1 and STAT2. Interacts (serine-phosphorylated form) with FBXW11, the substrate recognition component of a SCF (SKP1-CUL1-F-box protein) E3 ubiquitin-protein ligase complex. 3Interacts with SHMT2; this promotes interaction with ABRAXAS2 and the BRISC complex. Interacts with TRIM10; this interaction prevents association between IFNAR1 and TYK2. Ubiquitinated. This leads to its internalization and lysosomal degradation. The 'Lys-63'-linked ubiquitin chains are cleaved off by the BRISC complex; this prevents receptor internalization and degradation. Probable ubiquitination sites have been identified in human, but are poorly conserved across species. Post-translationally, phosphorylated on serine residues in response to interferon binding; this promotes interaction with FBXW11 and ubiquitination.

The protein localises to the cell membrane. It localises to the late endosome. It is found in the lysosome. In terms of biological role, together with IFNAR2, forms the heterodimeric receptor for type I interferons (including interferons alpha, beta, epsilon, omega and kappa). Type I interferon binding activates the JAK-STAT signaling cascade, and triggers tyrosine phosphorylation of a number of proteins including JAKs, TYK2, STAT proteins and the IFNR alpha- and beta-subunits themselves. STAT proteins are then phosphorylated by the JAKs, promoting their translocation into the nucleus to regulate expression of interferon-regulated genes. Can also act independently of IFNAR2: form an active IFNB1 receptor by itself and activate a signaling cascade that does not involve activation of the JAK-STAT pathway. This chain is Interferon alpha/beta receptor 1 (Ifnar1), found in Mus musculus (Mouse).